The following is a 363-amino-acid chain: Cytoskeleton protein RodZ (363 aa).

At 1-111 (MNTEASQDQT…LGKKHKKRDG (111 aa)) the chain is on the cytoplasmic side. The HTH cro/C1-type domain maps to 19 to 79 (LRQARESLGL…KLVHLPEDEL (61 aa)). A DNA-binding region (H-T-H motif) is located at residues 30–49 (QQTVAERLCLKVSTIRDIEE). The chain crosses the membrane as a helical; Signal-anchor for type II membrane protein span at residues 112 to 132 (WLMSFTWLIVLVVLGLTGAWW). At 133-363 (WQNHQAQQAE…RVARLTVGVE (231 aa)) the chain is on the periplasmic side. The interval 151 to 277 (SAQLSQNGGQ…PLPTADAGVS (127 aa)) is disordered. Residues 188–199 (PLTNHSVSAITN) are compositionally biased toward polar residues. Positions 200–225 (SAPTTSSVPTTSSATTSSVPTTSSVP) are enriched in low complexity. The span at 226 to 243 (KINSTEPVDTANTNTTMH) shows a compositional bias: polar residues. Residues 247–259 (AASAAVSPSQVPQ) show a composition bias toward low complexity.

It belongs to the RodZ family.

It is found in the cell inner membrane. Its function is as follows. Cytoskeletal protein that is involved in cell-shape control through regulation of the length of the long axis. The chain is Cytoskeleton protein RodZ from Yersinia pseudotuberculosis serotype O:1b (strain IP 31758).